The chain runs to 47 residues: Photosystem II reaction center protein K (47 aa).

Residues 1–10 (MNIGFDMILA) constitute a propeptide that is removed on maturation. A helical transmembrane segment spans residues 22–42 (LVDVLPVIPLLFLLLAFVWQA).

Belongs to the PsbK family. As to quaternary structure, PSII is composed of 1 copy each of membrane proteins PsbA, PsbB, PsbC, PsbD, PsbE, PsbF, PsbH, PsbI, PsbJ, PsbK, PsbL, PsbM, PsbT, PsbX, PsbY, PsbZ, Psb30/Ycf12, at least 3 peripheral proteins of the oxygen-evolving complex and a large number of cofactors. It forms dimeric complexes.

It is found in the plastid. The protein localises to the chloroplast thylakoid membrane. One of the components of the core complex of photosystem II (PSII). PSII is a light-driven water:plastoquinone oxidoreductase that uses light energy to abstract electrons from H(2)O, generating O(2) and a proton gradient subsequently used for ATP formation. It consists of a core antenna complex that captures photons, and an electron transfer chain that converts photonic excitation into a charge separation. This Mesostigma viride (Green alga) protein is Photosystem II reaction center protein K.